We begin with the raw amino-acid sequence, 364 residues long: G-protein coupled receptor 4 (364 aa).

Topologically, residues 1-8 (MCNVSQDS) are extracellular. Asn3 carries N-linked (GlcNAc...) asparagine glycosylation. The helical transmembrane segment at 9 to 45 (CNIDSRLDSLFPPTLYIFVMVIGFPTNCLSLWAAFVQ) threads the bilayer. 2 cysteine pairs are disulfide-bonded: Cys9–Cys258 and Cys90–Cys168. Residues 46 to 49 (VRQK) lie on the Cytoplasmic side of the membrane. Residues 50–80 (NELGVYLLNLSISDLLYIATLPPWVNYFLHQ) form a helical membrane-spanning segment. Topologically, residues 81–85 (DNWIH) are extracellular. Residues 86 to 121 (GPESCKLFGFILYTNIYISIGFLSCISVDRYLAVAH) traverse the membrane as a helical segment. Over 122 to 129 (PLKFAKVR) the chain is Cytoplasmic. The helical transmembrane segment at 130 to 156 (RVKTAAVVSAVVWAIEIGANSAPLFHN) threads the bilayer. Residues 157–172 (ELFEDRFNHTFCFEKY) lie on the Extracellular side of the membrane. The interval 157–172 (ELFEDRFNHTFCFEKY) is extracellular loop 2 (ECL2). Asn164 carries N-linked (GlcNAc...) asparagine glycosylation. A helical transmembrane segment spans residues 173 to 210 (PMEDWVAQMNLYRVFVGFLFPWVLMLFCYQGILRAVKT). The Cytoplasmic segment spans residues 211–214 (NVST). The helical transmembrane segment at 215-250 (EREEKAKIKRLALSLIAILLFCFAPYHLILLSRSVV) threads the bilayer. The Extracellular segment spans residues 251-260 (YLGQPCDCTF). Residues 261-289 (EENIFTAYHVSLALTSLNCVADPILYCLA) traverse the membrane as a helical segment. The Cytoplasmic segment spans residues 290–364 (NEGARSEVTR…RVRRRRDCKC (75 aa)).

The protein belongs to the G-protein coupled receptor 1 family.

Its subcellular location is the cell membrane. With respect to regulation, activated by a network of residues that connects an extracellular-facing cavity to Glu-145, a conserved charged residue buried in the transmembrane core of the receptor. Protonation likely drives conformational changes in extracellular loop 2 (ECL2), which stabilizes movement of transmembrane 3 (TM3) and a series of rearrangements that connect the extracellular-facing cavity to Glu-145, a residue only conserved in proton-sensing G-protein coupled receptors. In terms of biological role, proton-sensing G-protein coupled receptor activated by extracellular pH, which is required to monitor pH changes and generate adaptive reactions. Ligand binding causes a conformation change that triggers signaling via guanine nucleotide-binding proteins (G proteins) and modulates the activity of downstream effectors, such as adenylate cyclase. The sequence is that of G-protein coupled receptor 4 from Callorhinchus milii (Ghost shark).